The sequence spans 473 residues: Photosystem II CP43 reaction center protein (473 aa).

The propeptide occupies 1–14 (MKILYSPRRFYPVE). Threonine 15 carries the post-translational modification N-acetylthreonine. Threonine 15 bears the Phosphothreonine mark. 5 consecutive transmembrane segments (helical) span residues 69-93 (LFEVAHFVSEKPMYEQGLILLPHLA), 134-155 (LIGPETLEESFPFFGYTWKDKN), 178-200 (KALYFGGLYDTWAPGGGDVREIT), 255-275 (KPFAWARRAFVWSGEAYLSYS), and 291-312 (WFNNTAYPSEFYGPTGPEASQA). Glutamate 367 lines the [CaMn4O5] cluster pocket. Residues 447 to 471 (RARAAAAGFEKGIDRDTEPVLSMTP) form a helical membrane-spanning segment.

This sequence belongs to the PsbB/PsbC family. PsbC subfamily. In terms of assembly, PSII is composed of 1 copy each of membrane proteins PsbA, PsbB, PsbC, PsbD, PsbE, PsbF, PsbH, PsbI, PsbJ, PsbK, PsbL, PsbM, PsbT, PsbX, PsbY, PsbZ, Psb30/Ycf12, at least 3 peripheral proteins of the oxygen-evolving complex and a large number of cofactors. It forms dimeric complexes. Requires Binds multiple chlorophylls and provides some of the ligands for the Ca-4Mn-5O cluster of the oxygen-evolving complex. It may also provide a ligand for a Cl- that is required for oxygen evolution. PSII binds additional chlorophylls, carotenoids and specific lipids. as cofactor.

The protein localises to the plastid. It localises to the chloroplast thylakoid membrane. In terms of biological role, one of the components of the core complex of photosystem II (PSII). It binds chlorophyll and helps catalyze the primary light-induced photochemical processes of PSII. PSII is a light-driven water:plastoquinone oxidoreductase, using light energy to abstract electrons from H(2)O, generating O(2) and a proton gradient subsequently used for ATP formation. The polypeptide is Photosystem II CP43 reaction center protein (Adiantum capillus-veneris (Maidenhair fern)).